Reading from the N-terminus, the 808-residue chain is Protein SEY1 (808 aa).

Residues methionine 1 to proline 21 are disordered. Residues methionine 1–glutamine 701 lie on the Cytoplasmic side of the membrane. One can recognise a GB1/RHD3-type G domain in the interval glycine 57–tyrosine 286. Glycine 67–serine 74 lines the GTP pocket. A helical membrane pass occupies residues isoleucine 702–isoleucine 722. At arginine 723–proline 725 the chain is on the lumenal side. Residues leucine 726 to leucine 746 traverse the membrane as a helical segment. Residues leucine 747 to methionine 808 are Cytoplasmic-facing.

It belongs to the TRAFAC class dynamin-like GTPase superfamily. GB1/RHD3 GTPase family. RHD3 subfamily.

It is found in the endoplasmic reticulum membrane. Cooperates with the reticulon proteins and tubule-shaping DP1 family proteins to generate and maintain the structure of the tubular endoplasmic reticulum network. Has GTPase activity, which is required for its function in ER organization. The polypeptide is Protein SEY1 (Candida tropicalis (strain ATCC MYA-3404 / T1) (Yeast)).